We begin with the raw amino-acid sequence, 421 residues long: Diaminopimelate decarboxylase (421 aa).

K63 carries the post-translational modification N6-(pyridoxal phosphate)lysine. Residues G242 and 278 to 281 (EPGR) contribute to the pyridoxal 5'-phosphate site. R281, R317, and Y321 together coordinate substrate. C346 functions as the Proton donor in the catalytic mechanism. Substrate is bound by residues E347 and Y375. Y375 serves as a coordination point for pyridoxal 5'-phosphate.

It belongs to the Orn/Lys/Arg decarboxylase class-II family. LysA subfamily. As to quaternary structure, homodimer. Requires pyridoxal 5'-phosphate as cofactor.

The enzyme catalyses meso-2,6-diaminopimelate + H(+) = L-lysine + CO2. The protein operates within amino-acid biosynthesis; L-lysine biosynthesis via DAP pathway; L-lysine from DL-2,6-diaminopimelate: step 1/1. Specifically catalyzes the decarboxylation of meso-diaminopimelate (meso-DAP) to L-lysine. This Zymomonas mobilis subsp. mobilis (strain ATCC 31821 / ZM4 / CP4) protein is Diaminopimelate decarboxylase.